A 243-amino-acid polypeptide reads, in one-letter code: Transmembrane protein 174 (243 aa).

2 consecutive transmembrane segments (helical) span residues 40-60 (LLFS…MGWI) and 73-93 (LLGP…VCKF).

Interacts with SLC34A1; regulates SLC34A1 internalization by PTH and FGF23.

Its subcellular location is the endoplasmic reticulum membrane. It localises to the apical cell membrane. Functionally, regulator of plasma phosphate homeostasis. Decreases serum inorganic phosphate (Pi) uptake by regulating the sodium-phosphate cotransporter SLC34A1 trafficking by PTH and FGF23 in the kidney. In Pongo abelii (Sumatran orangutan), this protein is Transmembrane protein 174 (TMEM174).